The sequence spans 333 residues: Phenylalanine--tRNA ligase alpha subunit (333 aa).

Residue Glu254 coordinates Mg(2+).

Belongs to the class-II aminoacyl-tRNA synthetase family. Phe-tRNA synthetase alpha subunit type 1 subfamily. Tetramer of two alpha and two beta subunits. Mg(2+) is required as a cofactor.

It localises to the cytoplasm. It carries out the reaction tRNA(Phe) + L-phenylalanine + ATP = L-phenylalanyl-tRNA(Phe) + AMP + diphosphate + H(+). The chain is Phenylalanine--tRNA ligase alpha subunit from Xylella fastidiosa (strain M12).